Consider the following 243-residue polypeptide: Proteasome subunit alpha (243 aa).

It belongs to the peptidase T1A family. As to quaternary structure, the 20S proteasome core is composed of 14 alpha and 14 beta subunits that assemble into four stacked heptameric rings, resulting in a barrel-shaped structure. The two inner rings, each composed of seven catalytic beta subunits, are sandwiched by two outer rings, each composed of seven alpha subunits. The catalytic chamber with the active sites is on the inside of the barrel. Has a gated structure, the ends of the cylinder being occluded by the N-termini of the alpha-subunits. Is capped at one or both ends by the proteasome regulatory ATPase, PAN.

It is found in the cytoplasm. The formation of the proteasomal ATPase PAN-20S proteasome complex, via the docking of the C-termini of PAN into the intersubunit pockets in the alpha-rings, triggers opening of the gate for substrate entry. Interconversion between the open-gate and close-gate conformations leads to a dynamic regulation of the 20S proteasome proteolysis activity. Functionally, component of the proteasome core, a large protease complex with broad specificity involved in protein degradation. This is Proteasome subunit alpha from Pyrobaculum aerophilum (strain ATCC 51768 / DSM 7523 / JCM 9630 / CIP 104966 / NBRC 100827 / IM2).